Consider the following 314-residue polypeptide: Acetyl-coenzyme A carboxylase carboxyl transferase subunit beta (314 aa).

Positions 24-293 (LWIKCPDTGQ…IDAAPEPSPA (270 aa)) constitute a CoA carboxyltransferase N-terminal domain. The tract at residues 283 to 314 (EIDAAPEPSPAAEEPAEPMPAPEAAAPSAPPA) is disordered. 2 stretches are compositionally biased toward low complexity: residues 284-295 (IDAAPEPSPAAE) and 304-314 (PEAAAPSAPPA).

It belongs to the AccD/PCCB family. As to quaternary structure, acetyl-CoA carboxylase is a heterohexamer composed of biotin carboxyl carrier protein (AccB), biotin carboxylase (AccC) and two subunits each of ACCase subunit alpha (AccA) and ACCase subunit beta (AccD).

The protein localises to the cytoplasm. It carries out the reaction N(6)-carboxybiotinyl-L-lysyl-[protein] + acetyl-CoA = N(6)-biotinyl-L-lysyl-[protein] + malonyl-CoA. The protein operates within lipid metabolism; malonyl-CoA biosynthesis; malonyl-CoA from acetyl-CoA: step 1/1. Functionally, component of the acetyl coenzyme A carboxylase (ACC) complex. Biotin carboxylase (BC) catalyzes the carboxylation of biotin on its carrier protein (BCCP) and then the CO(2) group is transferred by the transcarboxylase to acetyl-CoA to form malonyl-CoA. This chain is Acetyl-coenzyme A carboxylase carboxyl transferase subunit beta, found in Nitrobacter hamburgensis (strain DSM 10229 / NCIMB 13809 / X14).